The following is a 606-amino-acid chain: ATP-dependent RNA helicase DBP6 (606 aa).

2 disordered regions span residues 1–88 (MFSQ…PEVD) and 101–124 (KFKQSTESETIEQDKEEDGEEDAN). Composition is skewed to acidic residues over residues 35 to 71 (DESSDEEEEEEETDESEHESSQDEDINEEEPEEEDED), 78 to 88 (NMEIDSQPEVD), and 109 to 124 (ETIEQDKEEDGEEDAN). The short motif at 169–197 (KAFTDFKSSSFMIKNLEKMGFTEAFSVQI) is the Q motif element. The region spanning 211 to 393 (KLKPDRVGDI…SLKFYNPRLI (183 aa)) is the Helicase ATP-binding domain. 224–231 (ASTGSGKT) provides a ligand contact to ATP. Residues 331–334 (DEAD) carry the DEAD box motif. One can recognise a Helicase C-terminal domain in the interval 430 to 585 (ILTKFLISTN…NVDLNVKELI (156 aa)).

The protein belongs to the DEAD box helicase family. DDX51/DBP6 subfamily. As to quaternary structure, associated with pre-ribosomal particles.

It localises to the nucleus. The protein localises to the nucleolus. It carries out the reaction ATP + H2O = ADP + phosphate + H(+). ATP-binding RNA helicase involved in the biogenesis of 60S ribosomal subunits and is required for the normal formation of 25S and 5.8S rRNAs. This Candida albicans (strain SC5314 / ATCC MYA-2876) (Yeast) protein is ATP-dependent RNA helicase DBP6 (DBP6).